The chain runs to 398 residues: Carbamoyl phosphate synthase small chain (398 aa).

The CPSase stretch occupies residues 1–207 (MIQTISSSRP…KGYGTNNVHN (207 aa)). L-glutamine-binding residues include S60, G257, and G259. Residues 209–397 (HIVAIDYGIK…CDLIMNHKKI (189 aa)) form the Glutamine amidotransferase type-1 domain. The active-site Nucleophile is the C286. L-glutamine contacts are provided by L287, Q290, N328, G330, and F331. Catalysis depends on residues H370 and E372.

This sequence belongs to the CarA family. As to quaternary structure, composed of two chains; the small (or glutamine) chain promotes the hydrolysis of glutamine to ammonia, which is used by the large (or ammonia) chain to synthesize carbamoyl phosphate. Tetramer of heterodimers (alpha,beta)4.

The enzyme catalyses hydrogencarbonate + L-glutamine + 2 ATP + H2O = carbamoyl phosphate + L-glutamate + 2 ADP + phosphate + 2 H(+). It carries out the reaction L-glutamine + H2O = L-glutamate + NH4(+). The protein operates within amino-acid biosynthesis; L-arginine biosynthesis; carbamoyl phosphate from bicarbonate: step 1/1. It participates in pyrimidine metabolism; UMP biosynthesis via de novo pathway; (S)-dihydroorotate from bicarbonate: step 1/3. In terms of biological role, small subunit of the glutamine-dependent carbamoyl phosphate synthetase (CPSase). CPSase catalyzes the formation of carbamoyl phosphate from the ammonia moiety of glutamine, carbonate, and phosphate donated by ATP, constituting the first step of 2 biosynthetic pathways, one leading to arginine and/or urea and the other to pyrimidine nucleotides. The small subunit (glutamine amidotransferase) binds and cleaves glutamine to supply the large subunit with the substrate ammonia. This Bartonella tribocorum (strain CIP 105476 / IBS 506) protein is Carbamoyl phosphate synthase small chain.